Consider the following 304-residue polypeptide: Lipoyl synthase (304 aa).

Residues Cys41, Cys46, Cys52, Cys68, Cys72, Cys75, and Ser281 each contribute to the [4Fe-4S] cluster site. The Radical SAM core domain maps to 54-270 (GARRTATFMI…RKIAMEKGFK (217 aa)). The tract at residues 282-304 (YHADEQVNEAAKEKQRQGEEQLN) is disordered.

Belongs to the radical SAM superfamily. Lipoyl synthase family. The cofactor is [4Fe-4S] cluster.

Its subcellular location is the cytoplasm. It catalyses the reaction [[Fe-S] cluster scaffold protein carrying a second [4Fe-4S](2+) cluster] + N(6)-octanoyl-L-lysyl-[protein] + 2 oxidized [2Fe-2S]-[ferredoxin] + 2 S-adenosyl-L-methionine + 4 H(+) = [[Fe-S] cluster scaffold protein] + N(6)-[(R)-dihydrolipoyl]-L-lysyl-[protein] + 4 Fe(3+) + 2 hydrogen sulfide + 2 5'-deoxyadenosine + 2 L-methionine + 2 reduced [2Fe-2S]-[ferredoxin]. The protein operates within protein modification; protein lipoylation via endogenous pathway; protein N(6)-(lipoyl)lysine from octanoyl-[acyl-carrier-protein]. Catalyzes the radical-mediated insertion of two sulfur atoms into the C-6 and C-8 positions of the octanoyl moiety bound to the lipoyl domains of lipoate-dependent enzymes, thereby converting the octanoylated domains into lipoylated derivatives. The chain is Lipoyl synthase from Staphylococcus epidermidis (strain ATCC 35984 / DSM 28319 / BCRC 17069 / CCUG 31568 / BM 3577 / RP62A).